A 299-amino-acid chain; its full sequence is NAD(+) hydrolase PdTIR (299 aa).

Residues 164-297 (PPHDIFISHA…EIVADLMAII (134 aa)) enclose the TIR domain. Residues 173–174 (AW) and Arg203 each bind NAD(+). The active site involves Glu239.

As to quaternary structure, homodimer. Interacts with host MYD88.

The enzyme catalyses NAD(+) + H2O = ADP-D-ribose + nicotinamide + H(+). Functionally, NAD(+) hydrolase (NADase) that catalyzes cleavage of NAD(+) into ADP-D-ribose (ADPR) and nicotinamide. The chain is NAD(+) hydrolase PdTIR from Paracoccus denitrificans (strain Pd 1222).